The chain runs to 150 residues: MQIILLKKIINKGNIGDKIKVKAGYARNFLFPKKIAIIASEKNLKFFEKKRKILEEQSKYENFKLKERFRNIKSLKEIEIYCKAGSKGKLFGSIGANHIIEKIKERGIRIMKNEIKLTNGPLKTIGKHNIKIKVKSNMCTEICVILKNNI.

This sequence belongs to the bacterial ribosomal protein bL9 family.

In terms of biological role, binds to the 23S rRNA. The polypeptide is Large ribosomal subunit protein bL9 (Wigglesworthia glossinidia brevipalpis).